Reading from the N-terminus, the 170-residue chain is Adenine phosphoribosyltransferase (170 aa).

Belongs to the purine/pyrimidine phosphoribosyltransferase family. In terms of assembly, homodimer.

Its subcellular location is the cytoplasm. It catalyses the reaction AMP + diphosphate = 5-phospho-alpha-D-ribose 1-diphosphate + adenine. It participates in purine metabolism; AMP biosynthesis via salvage pathway; AMP from adenine: step 1/1. In terms of biological role, catalyzes a salvage reaction resulting in the formation of AMP, that is energically less costly than de novo synthesis. In Streptococcus sanguinis (strain SK36), this protein is Adenine phosphoribosyltransferase.